The following is a 339-amino-acid chain: tRNA N6-adenosine threonylcarbamoyltransferase (339 aa).

The Fe cation site is built by H111 and H115. Substrate is bound by residues 134–138 (LVSGG), D167, G180, and N270. A Fe cation-binding site is contributed by D298.

This sequence belongs to the KAE1 / TsaD family. It depends on Fe(2+) as a cofactor.

Its subcellular location is the cytoplasm. It carries out the reaction L-threonylcarbamoyladenylate + adenosine(37) in tRNA = N(6)-L-threonylcarbamoyladenosine(37) in tRNA + AMP + H(+). Required for the formation of a threonylcarbamoyl group on adenosine at position 37 (t(6)A37) in tRNAs that read codons beginning with adenine. Is involved in the transfer of the threonylcarbamoyl moiety of threonylcarbamoyl-AMP (TC-AMP) to the N6 group of A37, together with TsaE and TsaB. TsaD likely plays a direct catalytic role in this reaction. The sequence is that of tRNA N6-adenosine threonylcarbamoyltransferase from Alkalilimnicola ehrlichii (strain ATCC BAA-1101 / DSM 17681 / MLHE-1).